We begin with the raw amino-acid sequence, 1165 residues long: Leptin receptor (1165 aa).

The signal sequence occupies residues 1–21 (MTCPKFSVALLHWEFIYVITA). Residues 22–838 (FDLAYPITPW…TQDGEKHRND (817 aa)) are Extracellular-facing. Disulfide bonds link C37–C90, C89–C99, C131–C142, C186–C196, and C188–C193. N-linked (GlcNAc...) asparagine glycans are attached at residues N41, N55, N72, N80, and N98. A glycan (N-linked (GlcNAc...) asparagine) is linked at N187. 4 N-linked (GlcNAc...) asparagine glycosylation sites follow: N206, N276, N347, and N397. Residues 239-332 (PPLGLHMEIT…STPFTFTTQD (94 aa)) form the Fibronectin type-III 1 domain. 2 disulfide bridges follow: C352–C412 and C413–C418. A glycan (N-linked (GlcNAc...) asparagine) is linked at N433. Disulfide bonds link C436/C447, C473/C528, and C488/C498. The segment at 467–484 (HRSSLYCSDVPSVHPISE) is leptin-binding. Fibronectin type-III domains are found at residues 539-634 (PPSS…TVVT), 642-736 (GPEF…WPMS), and 740-834 (IVQS…DGEK). The WSXWS motif signature appears at 622–626 (WSNWS). Residues N624, N659, N670, N697, N728, and N750 are each glycosylated (N-linked (GlcNAc...) asparagine). A helical membrane pass occupies residues 839 to 861 (AGLYVIVPIIISSSILLLGTLLM). The Cytoplasmic segment spans residues 862 to 1165 (SHQRMKKLFW…MENKMYDLTV (304 aa)). The Box 1 motif signature appears at 870–878 (FWEDVPNPK). A Phosphoserine modification is found at S881. A required for JAK2 activation region spans residues 892–897 (ETFEHL). The interval 897 to 905 (LFIKHTESV) is required for STAT3 phosphorylation. A Phosphotyrosine; by JAK2 modification is found at Y986. Y1079 is modified (phosphotyrosine). Y1141 is modified (phosphotyrosine; by JAK2).

This sequence belongs to the type I cytokine receptor family. Type 2 subfamily. Present as a mixture of monomers and dimers. The phosphorylated receptor binds a number of SH2 domain-containing proteins such as JAK2, STAT3, PTPN11, and SOCS3. Interaction with SOCS3 inhibits JAK/STAT signaling and MAPK cascade. On ligand binding, phosphorylated on two conserved C-terminal tyrosine residues by JAK2. Tyr-986 is required for complete binding and activation of PTPN11, ERK/FOS activation,for interaction with SOCS3 and SOCS3 mediated inhibition of leptin signaling. Phosphorylation on Tyr-1141 is required for STAT3 binding/activation. Phosphorylation of Tyr-1079 has a more accessory role. Kidney, liver, spleen, lung, brain, testis, uterus, ovary, corpus luteum, theca and granulosa cells.

The protein localises to the cell membrane. It localises to the basolateral cell membrane. Its function is as follows. Receptor for hormone LEP/leptin. On ligand binding, mediates LEP central and peripheral effects through the activation of different signaling pathways such as JAK2/STAT3 and MAPK cascade/FOS. In the hypothalamus, LEP acts as an appetite-regulating factor that induces a decrease in food intake and an increase in energy consumption by inducing anorexinogenic factors and suppressing orexigenic neuropeptides, also regulates bone mass and secretion of hypothalamo-pituitary-adrenal hormones. In the periphery, increases basal metabolism, influences reproductive function, regulates pancreatic beta-cell function and insulin secretion, is pro-angiogenic and affects innate and adaptive immunity. Control of energy homeostasis and melanocortin production (stimulation of POMC and full repression of AgRP transcription) is mediated by STAT3 signaling, whereas distinct signals regulate NPY and the control of fertility, growth and glucose homeostasis. Involved in the regulation of counter-regulatory response to hypoglycemia by inhibiting neurons of the parabrachial nucleus. Has a specific effect on T lymphocyte responses, differentially regulating the proliferation of naive and memory T-cells. Leptin increases Th1 and suppresses Th2 cytokine production. The protein is Leptin receptor (LEPR) of Sus scrofa (Pig).